Reading from the N-terminus, the 1411-residue chain is Uveal autoantigen with coiled-coil domains and ankyrin repeats (1411 aa).

Methionine 1 is modified (N-acetylmethionine). The disordered stretch occupies residues 1 to 30 (MKSLKSRLWKQDAPGPTSPSSPTAVASTQS). The span at 13 to 30 (APGPTSPSSPTAVASTQS) shows a compositional bias: low complexity. 6 ANK repeats span residues 69–98 (EGRSAFHVVASKGNLECLNAILTHGIDVAT), 102–131 (AGRNALHLAAKYGHALCLQKLLQYNCPTEH), 135–164 (QGRTALHDAVMADCPSSIQLLCDHGASVNA), 168–197 (DGRTPLVLATQMCRPTICQLLIDRGADVNS), 201–230 (QNRTALMLGCEYGCRDAVEVLVKNGADLTL), and 234–263 (LGHDSSYYARIGDNLDILNLLKTASENTNK). Residues 263–301 (KGRELWRKGPPLQQRNLSHTQDEGSVKSTQREQREPHSF) form a disordered region. The residue at position 280 (serine 280) is a Phosphoserine. The span at 282 to 301 (TQDEGSVKSTQREQREPHSF) shows a compositional bias: basic and acidic residues. Coiled coils occupy residues 299 to 379 (HSFQ…NRFK), 442 to 624 (SENE…LKEL), and 652 to 1380 (VKRL…AIYR). The disordered stretch occupies residues 1006–1031 (GLKEQLSEQTHKCRQRDEEVKKGKQE).

As to quaternary structure, component of the apoptosome complex, composed of APAF1, pro-caspase-9 and UACA. In the complex, it probably interacts directly with APAF1. Interacts with LGALS3, ARF6 and ACTB. Interacts with RAB39A. Highly expressed in heart, liver, kidney and testis. Weakly expressed in lung and skeletal muscle. Not expressed in brain and spleen.

It localises to the nucleus. Its subcellular location is the cytoplasm. The protein localises to the cytoskeleton. Functionally, regulates APAF1 expression and plays an important role in the regulation of stress-induced apoptosis. Promotes apoptosis by regulating three pathways, apoptosome up-regulation, LGALS3/galectin-3 down-regulation and NF-kappa-B inactivation. Regulates the redistribution of APAF1 into the nucleus after proapoptotic stress. Down-regulates the expression of LGALS3 by inhibiting NFKB1. Its function is as follows. Modulates isoactin dynamics to regulate the morphological alterations required for cell growth and motility. Interaction with ARF6 may modulate cell shape and motility after injury. May be involved in multiple neurite formation. This chain is Uveal autoantigen with coiled-coil domains and ankyrin repeats (Uaca), found in Mus musculus (Mouse).